The following is a 416-amino-acid chain: Multifunctional CCA protein (416 aa).

ATP is bound by residues Gly-8 and Arg-11. The CTP site is built by Gly-8 and Arg-11. The Mg(2+) site is built by Asp-21 and Asp-23. ATP-binding residues include Arg-91, Arg-137, and Arg-140. CTP is bound by residues Arg-91, Arg-137, and Arg-140. Residues 228–329 (TGVHTLMVLA…VKIFDKADFW (102 aa)) form the HD domain.

It belongs to the tRNA nucleotidyltransferase/poly(A) polymerase family. Bacterial CCA-adding enzyme type 1 subfamily. Monomer. Can also form homodimers and oligomers. Mg(2+) serves as cofactor. It depends on Ni(2+) as a cofactor.

The enzyme catalyses a tRNA precursor + 2 CTP + ATP = a tRNA with a 3' CCA end + 3 diphosphate. It catalyses the reaction a tRNA with a 3' CCA end + 2 CTP + ATP = a tRNA with a 3' CCACCA end + 3 diphosphate. Functionally, catalyzes the addition and repair of the essential 3'-terminal CCA sequence in tRNAs without using a nucleic acid template. Adds these three nucleotides in the order of C, C, and A to the tRNA nucleotide-73, using CTP and ATP as substrates and producing inorganic pyrophosphate. tRNA 3'-terminal CCA addition is required both for tRNA processing and repair. Also involved in tRNA surveillance by mediating tandem CCA addition to generate a CCACCA at the 3' terminus of unstable tRNAs. While stable tRNAs receive only 3'-terminal CCA, unstable tRNAs are marked with CCACCA and rapidly degraded. The sequence is that of Multifunctional CCA protein from Shewanella baltica (strain OS185).